The sequence spans 248 residues: MPGRSTSSSSSGSTGFISFSGVESALSSLKTFQSCISSGMDTASSVALDLVETQTEVSSEYSMDKAMVEFAMMDRELNHYLKAVQSTINHVKEERSEKIPDLKLLVEKKFLALQNKNSDADFQNNEKFVQFKQQLKELKKQYGLQSDREADITEGVDEDMIVTQSQTNFICPITQLEMKKPVKNKVCGHTYEEEAIVRMIESKHERKKKACCPKIGCSHVDMRMSDLIQDEALRRAIESHKKRRRQSN.

The residue at position 1 (Met1) is an N-acetylmethionine. Glycyl lysine isopeptide (Lys-Gly) (interchain with G-Cter in SUMO2) cross-links involve residues Lys92 and Lys109. Ser118 carries the phosphoserine modification. Glycyl lysine isopeptide (Lys-Gly) (interchain with G-Cter in SUMO2) cross-links involve residues Lys127 and Lys132. The SP-RING-type zinc finger occupies 156-242; it reads VDEDMIVTQS…LRRAIESHKK (87 aa). The Zn(2+) site is built by Cys187, His189, Cys212, and Cys217.

The protein belongs to the NSE2 family. As to quaternary structure, component of the SMC5-SMC6 complex which consists at least of SMC5, SMC6, NSMCE2, NSMCE1, NSMCE4A or EID3 and NSMCE3. In terms of processing, sumoylated, possibly via autosumoylation.

It localises to the nucleus. Its subcellular location is the chromosome. The protein resides in the telomere. The protein localises to the PML body. It functions in the pathway protein modification; protein sumoylation. Functionally, E3 SUMO-protein ligase component of the SMC5-SMC6 complex, a complex involved in DNA double-strand break repair by homologous recombination. Is not be required for the stability of the complex. The complex may promote sister chromatid homologous recombination by recruiting the SMC1-SMC3 cohesin complex to double-strand breaks. Acts as an E3 ligase mediating SUMO attachment to various proteins such as SMC6L1 and TSNAX, the shelterin complex subunits TERF1, TERF2, TINF2 and TERF2IP, RAD51AP1, and maybe the cohesin components RAD21 and STAG2. Required for recruitment of telomeres to PML nuclear bodies. Required for sister chromatid cohesion during prometaphase and mitotic progression. This chain is E3 SUMO-protein ligase NSE2 (NSMCE2), found in Bos taurus (Bovine).